We begin with the raw amino-acid sequence, 191 residues long: Heme-binding protein 1 (191 aa).

This sequence belongs to the HEBP family. As to quaternary structure, monomer.

The protein resides in the cytoplasm. Its function is as follows. May bind free porphyrinogens that may be present in the cell and thus facilitate removal of these potentially toxic compound. Binds with a high affinity to one molecule of heme or porphyrins. It binds metalloporphyrins, free porphyrins and N-methylprotoporphyrin with similar affinities. This chain is Heme-binding protein 1 (HEBP1), found in Bos taurus (Bovine).